Reading from the N-terminus, the 189-residue chain is Ribonuclease M5 (189 aa).

The Toprim domain occupies 8-91 (KEIIVVEGKD…AFLPKEEALA (84 aa)). Mg(2+)-binding residues include E14, D60, and D62.

This sequence belongs to the ribonuclease M5 family. It depends on Mg(2+) as a cofactor.

The protein localises to the cytoplasm. The enzyme catalyses Endonucleolytic cleavage of RNA, removing 21 and 42 nucleotides, respectively, from the 5'- and 3'-termini of a 5S-rRNA precursor.. Required for correct processing of both the 5' and 3' ends of 5S rRNA precursor. Cleaves both sides of a double-stranded region yielding mature 5S rRNA in one step. In Bacillus cereus (strain ATCC 14579 / DSM 31 / CCUG 7414 / JCM 2152 / NBRC 15305 / NCIMB 9373 / NCTC 2599 / NRRL B-3711), this protein is Ribonuclease M5.